Reading from the N-terminus, the 201-residue chain is Ran-specific GTPase-activating protein (201 aa).

Residues 1–26 (MAAAKDTHEDHDTSTENTDESNHDPQ) show a composition bias toward basic and acidic residues. Positions 1 to 35 (MAAAKDTHEDHDTSTENTDESNHDPQFEPIVSLPE) are disordered. Residue Ala-2 is modified to N-acetylalanine. Phosphothreonine is present on residues Thr-13 and Thr-18. 2 positions are modified to phosphoserine: Ser-21 and Ser-60. The 139-residue stretch at 26 to 164 (QFEPIVSLPE…FEECRKEIEE (139 aa)) folds into the RanBD1 domain. Lys-150 carries the N6-acetyllysine; alternate modification. Position 150 is an N6-succinyllysine; alternate (Lys-150). A disordered region spans residues 163-201 (EEREKKAGSGKNDHAEKVAEKLEALSVKEETKEDAEEKQ). N6-acetyllysine is present on Lys-183. Ser-188 carries the post-translational modification Phosphoserine. Lys-190 participates in a covalent cross-link: Glycyl lysine isopeptide (Lys-Gly) (interchain with G-Cter in SUMO2).

It belongs to the RANBP1 family. In terms of assembly, interacts with RAN (via C-terminus of GTP-bound form) but not with GDP-bound RAN. Identified in a complex composed of RAN, RANGAP1 and RANBP1. Identified in a complex that contains TNPO1, RAN and RANBP1. Identified in a complex that contains CSE1L, KPNA2, RAN and RANBP1. Identified in a complex with nucleotide-free RAN and RCC1.

Functionally, plays a role in RAN-dependent nucleocytoplasmic transport. Alleviates the TNPO1-dependent inhibition of RAN GTPase activity and mediates the dissociation of RAN from proteins involved in transport into the nucleus. Induces a conformation change in the complex formed by XPO1 and RAN that triggers the release of the nuclear export signal of cargo proteins. Promotes the disassembly of the complex formed by RAN and importin beta. Promotes dissociation of RAN from a complex with KPNA2 and CSE1L. Required for normal mitotic spindle assembly and normal progress through mitosis via its effect on RAN. Does not increase the RAN GTPase activity by itself, but increases GTP hydrolysis mediated by RANGAP1. Inhibits RCC1-dependent exchange of RAN-bound GDP by GTP. The protein is Ran-specific GTPase-activating protein (RANBP1) of Homo sapiens (Human).